The primary structure comprises 203 residues: Nucleoside triphosphate pyrophosphatase (203 aa).

Catalysis depends on D80, which acts as the Proton acceptor.

Belongs to the Maf family. Requires a divalent metal cation as cofactor.

The protein resides in the cytoplasm. The catalysed reaction is a ribonucleoside 5'-triphosphate + H2O = a ribonucleoside 5'-phosphate + diphosphate + H(+). It carries out the reaction a 2'-deoxyribonucleoside 5'-triphosphate + H2O = a 2'-deoxyribonucleoside 5'-phosphate + diphosphate + H(+). Nucleoside triphosphate pyrophosphatase. May have a dual role in cell division arrest and in preventing the incorporation of modified nucleotides into cellular nucleic acids. This chain is Nucleoside triphosphate pyrophosphatase, found in Gluconobacter oxydans (strain 621H) (Gluconobacter suboxydans).